The chain runs to 288 residues: Polyamine aminopropyltransferase (288 aa).

The PABS domain maps to 9 to 238; that stretch reads ETLHDQFGQY…GIMTFAWATD (230 aa). Position 33 (Gln-33) interacts with S-methyl-5'-thioadenosine. His-64 and Asp-88 together coordinate spermidine. S-methyl-5'-thioadenosine is bound by residues Glu-108 and 140–141; that span reads DG. Asp-158 functions as the Proton acceptor in the catalytic mechanism. 158 to 161 provides a ligand contact to spermidine; it reads DCTD. Residue Pro-165 coordinates S-methyl-5'-thioadenosine.

It belongs to the spermidine/spermine synthase family. In terms of assembly, homodimer or homotetramer.

It localises to the cytoplasm. The catalysed reaction is S-adenosyl 3-(methylsulfanyl)propylamine + putrescine = S-methyl-5'-thioadenosine + spermidine + H(+). It functions in the pathway amine and polyamine biosynthesis; spermidine biosynthesis; spermidine from putrescine: step 1/1. In terms of biological role, catalyzes the irreversible transfer of a propylamine group from the amino donor S-adenosylmethioninamine (decarboxy-AdoMet) to putrescine (1,4-diaminobutane) to yield spermidine. The polypeptide is Polyamine aminopropyltransferase (Escherichia coli O81 (strain ED1a)).